A 432-amino-acid chain; its full sequence is Histidine--tRNA ligase (432 aa).

The segment at 412 to 432 (TQVPLAAFPPEEGRPTYDDYA) is disordered. The segment covering 422–432 (EEGRPTYDDYA) has biased composition (basic and acidic residues).

This sequence belongs to the class-II aminoacyl-tRNA synthetase family.

It is found in the cytoplasm. It catalyses the reaction tRNA(His) + L-histidine + ATP = L-histidyl-tRNA(His) + AMP + diphosphate + H(+). The chain is Histidine--tRNA ligase from Natronomonas pharaonis (strain ATCC 35678 / DSM 2160 / CIP 103997 / JCM 8858 / NBRC 14720 / NCIMB 2260 / Gabara) (Halobacterium pharaonis).